Reading from the N-terminus, the 872-residue chain is DNA mismatch repair protein MutS (872 aa).

626–633 (GPNMAGKS) serves as a coordination point for ATP.

Belongs to the DNA mismatch repair MutS family.

Functionally, this protein is involved in the repair of mismatches in DNA. It is possible that it carries out the mismatch recognition step. This protein has a weak ATPase activity. The sequence is that of DNA mismatch repair protein MutS from Chlorobium phaeobacteroides (strain DSM 266 / SMG 266 / 2430).